The chain runs to 529 residues: Autoinducer-2 kinase (529 aa).

It belongs to the FGGY kinase family.

Its subcellular location is the cytoplasm. The catalysed reaction is (S)-4,5-dihydroxypentane-2,3-dione + ATP = (2S)-2-hydroxy-3,4-dioxopentyl phosphate + ADP + H(+). In terms of biological role, catalyzes the phosphorylation of autoinducer-2 (AI-2) to phospho-AI-2, which subsequently inactivates the transcriptional regulator LsrR and leads to the transcription of the lsr operon. Phosphorylates the ring-open form of (S)-4,5-dihydroxypentane-2,3-dione (DPD), which is the precursor to all AI-2 signaling molecules, at the C5 position. The protein is Autoinducer-2 kinase of Yersinia enterocolitica serotype O:8 / biotype 1B (strain NCTC 13174 / 8081).